The primary structure comprises 475 residues: UDP-glucosyltransferase UGT13248 (475 aa).

Low complexity predominate over residues M1–G17. The disordered stretch occupies residues M1–A20. UDP-alpha-D-glucose is bound by residues H38, S152, T299, C352, H369–E377, and D393–Q394.

Belongs to the UDP-glycosyltransferase family.

Functionally, involved in the detoxification of the Fusarium mycotoxin deoxynivalenol by the transfer of glucose from UDP-D-glucose to the hydroxyl group at C-3, forming deoxynivalenol-3-O-beta-D-glucoside. This is UDP-glucosyltransferase UGT13248 from Hordeum vulgare subsp. vulgare (Domesticated barley).